Here is a 186-residue protein sequence, read N- to C-terminus: Elongation factor P (186 aa).

It belongs to the elongation factor P family.

Its subcellular location is the cytoplasm. It functions in the pathway protein biosynthesis; polypeptide chain elongation. Involved in peptide bond synthesis. Stimulates efficient translation and peptide-bond synthesis on native or reconstituted 70S ribosomes in vitro. Probably functions indirectly by altering the affinity of the ribosome for aminoacyl-tRNA, thus increasing their reactivity as acceptors for peptidyl transferase. This chain is Elongation factor P, found in Shewanella sp. (strain W3-18-1).